A 213-amino-acid chain; its full sequence is RNA pyrophosphohydrolase (213 aa).

Residues 6–149 form the Nudix hydrolase domain; sequence GFRPNVGIVL…KRGVYEIALT (144 aa). Positions 38-59 match the Nudix box motif; sequence GGIDRGETPEQAMIRELHEEVG. Residues 185-213 form a disordered region; it reads NFELPPGGSFEPNPQTSYGLDASGKPHET.

It belongs to the Nudix hydrolase family. RppH subfamily. A divalent metal cation is required as a cofactor.

In terms of biological role, accelerates the degradation of transcripts by removing pyrophosphate from the 5'-end of triphosphorylated RNA, leading to a more labile monophosphorylated state that can stimulate subsequent ribonuclease cleavage. The chain is RNA pyrophosphohydrolase from Albidiferax ferrireducens (strain ATCC BAA-621 / DSM 15236 / T118) (Rhodoferax ferrireducens).